The chain runs to 631 residues: Phosphomethylpyrimidine synthase (631 aa).

Substrate contacts are provided by residues asparagine 239, methionine 268, tyrosine 297, histidine 333, 353–355 (SRG), 394–397 (DGLR), and glutamate 433. A Zn(2+)-binding site is contributed by histidine 437. Tyrosine 460 is a substrate binding site. Histidine 501 lines the Zn(2+) pocket. [4Fe-4S] cluster is bound by residues cysteine 581, cysteine 584, and cysteine 589.

The protein belongs to the ThiC family. In terms of assembly, homodimer. Requires [4Fe-4S] cluster as cofactor.

It carries out the reaction 5-amino-1-(5-phospho-beta-D-ribosyl)imidazole + S-adenosyl-L-methionine = 4-amino-2-methyl-5-(phosphooxymethyl)pyrimidine + CO + 5'-deoxyadenosine + formate + L-methionine + 3 H(+). The protein operates within cofactor biosynthesis; thiamine diphosphate biosynthesis. In terms of biological role, catalyzes the synthesis of the hydroxymethylpyrimidine phosphate (HMP-P) moiety of thiamine from aminoimidazole ribotide (AIR) in a radical S-adenosyl-L-methionine (SAM)-dependent reaction. This Escherichia fergusonii (strain ATCC 35469 / DSM 13698 / CCUG 18766 / IAM 14443 / JCM 21226 / LMG 7866 / NBRC 102419 / NCTC 12128 / CDC 0568-73) protein is Phosphomethylpyrimidine synthase.